The following is a 167-amino-acid chain: Large ribosomal subunit protein uL10 (167 aa).

Belongs to the universal ribosomal protein uL10 family. Part of the ribosomal stalk of the 50S ribosomal subunit. The N-terminus interacts with L11 and the large rRNA to form the base of the stalk. The C-terminus forms an elongated spine to which L12 dimers bind in a sequential fashion forming a multimeric L10(L12)X complex.

Forms part of the ribosomal stalk, playing a central role in the interaction of the ribosome with GTP-bound translation factors. This Yersinia enterocolitica serotype O:8 / biotype 1B (strain NCTC 13174 / 8081) protein is Large ribosomal subunit protein uL10.